The following is a 550-amino-acid chain: PAB1-binding protein 1 (550 aa).

Residues 11 to 95 enclose the Sm domain; sequence RLEYLYLNLV…IVMIEVQNAK (85 aa). Disordered regions lie at residues 201–296 and 441–550; these read HDDE…HKRM and GMGN…RVGK. Residues 214-223 are compositionally biased toward basic and acidic residues; that stretch reads DVHRPQEKKP. Positions 244–262 are enriched in low complexity; the sequence is AAAAPATAPTTAPAAAPAP. Residues 263 to 281 show a composition bias toward pro residues; the sequence is AAAPPAAAPAAAAPPPPPA.

The protein belongs to the ataxin-2 family. As to quaternary structure, forms a complex composed of at least MKT1, PBP1, XAC1 and LSM12. Forms a complex composed of at least MKT1L, PBP1, XAC1 and LSM12. Within the complex, interacts with MKT1 (via C-terminus); the interaction is direct. Interacts (via C-terminus) with ZC3H11; the interaction is direct.

It localises to the cytoplasm. The protein localises to the cytosol. Its subcellular location is the stress granule. Functionally, involved in post-transcriptional regulation of gene expression. Promotes mRNA stabilization by bridging poly(A)-binding protein to mRNAs. The sequence is that of PAB1-binding protein 1 from Trypanosoma brucei brucei (strain 927/4 GUTat10.1).